We begin with the raw amino-acid sequence, 1905 residues long: von Willebrand factor A domain-containing protein 8 (1905 aa).

The transit peptide at 1 to 45 directs the protein to the mitochondrion; sequence MQSRLLLLGAPGGLGDVASRRVRLLLRQVLRGRPGGDQQRLEVRL. The tract at residues 1–260 is interaction with PEX7; that stretch reads MQSRLLLLGA…PLDPPLRSRF (260 aa). 446 to 453 contacts ATP; sequence GGKGCGKT. Residues 1541 to 1560 are compositionally biased toward basic and acidic residues; the sequence is ERDSNEDVSDPKHGKEDPDN. The tract at residues 1541 to 1583 is disordered; sequence ERDSNEDVSDPKHGKEDPDNMPHVGGNTWAGGTGGRDTAGLGG. Residues 1568-1583 show a composition bias toward gly residues; the sequence is TWAGGTGGRDTAGLGG. A VWFA domain is found at 1714 to 1896; it reads RLRLVVDVSG…KKIPQILQQI (183 aa).

Monomer. Interacts with PEX7. Interacts with PEX5 in a PEX7-dependent manner. In terms of tissue distribution, isoform 1 is predominantly expressed in liver, kidney, pancreas, heart, and skeletal muscle (at protein level).

The protein localises to the mitochondrion. In terms of biological role, exhibits ATPase activity in vitro. The sequence is that of von Willebrand factor A domain-containing protein 8 (Vwa8) from Mus musculus (Mouse).